The chain runs to 2742 residues: MAASERLYELWLLYYAQKDLGYLQQWLKAFVGVFEKTISLSSLEPRRPEEAGAEVPLLPLDALHALAEQLDQDDLDQALLLLKLFIILCRNLENVEAGWGQVLVPRVLALLTVLMAELKGSSQESHGTQLENVALHALLLCEGLFDPYQTWRRQLTGEVISSKEKSKYKFPPAALPCEFGAFFQENLQDAERLPPTLLLRLIHLFGAILAGGKANGQMAVSAGSVQGLLGVVRGWGRGPAQDPQQVPLALRALVGAVHVLHASRAPPRGPELRTLLEGYFHILNADWPTSPSSSPEEALVTLRVSMLDAIPMMLACEDRPVLQATFLSNNCFEHLIRLIQNSKLYLQARAPPEGDSDLATWLLTEPDVQKVLDQDTDAIAVHVVRVLTCIMSGSPSAKEVFKERIGYQHLQEVLQSHGPPTHRLLQELLNMAVEGDHSMHPPPPIRNEQPVLVLMQWLPALPTAELRLFLAQRLWWLCDSCPASRTTCVQAGLVGYLLETLNTGTALGARCQEQLLALLQALGRVSLRPLELRRLLRPPPGLDSESSGNESQKARHAGAVIRALSGMARHRGPARALRYFDLTPSMAGIMVPPVQRWPGAGFTFHAWLCLQSSEAVPTSAPSRPLQRKQLYSFFTSSGSGFEAFFTAAGTLVVAVCTRKEYVTVNLPEVSFADSAWHCVAIVHVPGRRPFSQNLVNVFKDGHLVKTVPFRFPSLSEPFSSCCIGSAGHRTTTTTTGLPASSVSTALAHTHPSLTRSQSVPASTGLGWGPGLGTPLQEGSVSSTLAGTQDTRWGSPTSLEGELGAVAIFHEALQPSALRVLCSLGPNEPAPFKPEGELHEFGTKLLLHYSPQACKNNICLDLSPGHGLDGRLTGHRVETWDVKDVVNCVGGMGVLLPLLERVAVQPQEAEAGPCETHDLVGPELTSGRNTQGLLLPLGKSSEDRMERNAVAAFLLMLRNFLQNHTVNQESLVQCQGPAIIGALLRKVPSSAMDMNVLMSAQLLMEQAAADGGGPLLYLLYQHLLFNFHLWTLSDFAVRLGHIQYMSSMVREHRQKLRKKYGVQFLLDALRTHYSPQRERPLAADDLRTVQTSLLGLVREFLVRNFSVEDMQVVLNFLAATGDDGQVVGTLELLLTLLQGSPVQDPLAAFLLELGNLEVLLALLVRPKSTPLLTDRVCKILRRLQQNERLPERNRQRIRLHDCGLQGLVASLSEESISPQLCQGLYKLFVGTDCLNLSDLLAVVQLSLQADLSVRLDICRQLFYLIYGQPDVVRLLARQAGWQDVLTRLYVLEAATDSSPPRFLPELPISSELALSPPPTELPADSSDVFLPSESPCPDQDAFYQALSPFSTPFDLGLERASIGSGNTAGGGSSNGTVTPASQPGTPSPLDGPRPFPTAQGRHSSSLSNVLEDGSLLEPNISGDDTSNTSNPQQTPEEELCNLLTNVLFSVTWRGVEGSAEAAWRERGQVFSVLTQLGASATLVRPPDCIKRSLLEMMLESALTDIKEAPPGGLANLSQQALWLLRLLQDFLCAEGHGNQELWSEKLFEGVCNLLDRLGAWPHLANSTADLREMAQIGLRLVLGYILLEDPQLHAQAYVKLHTLLQTAVPTRREEACYVLSKLEAALSRALTTSSSETEHASTAVAASERCSWLVPLVRTLLDRAYGPLGLQWGLPSLPPTNGSPTFFEDFQAFCATAEWRHFIDKQVQPTMSKFEMDTYAKSHDLMSGFWNACYDTLMSSGQRHQRDRIQSRRAFKELVLEPAQRRARVEGLRYASVLKQQAAQHSTALLHWGALWRQLSSPCGAWALRIPPAPHWKLSSAETYSRMRLKLVPNHHFDPHLEASALRDNLGEAPMTPTEETSLPLAVTKEAKISAPPEELPEEQLGEEDLAALESLMEAAELDEKREKLVLSAECQLVTVVAVVPGLLEITTQHVYFYDGSTERVETEEGIGHDFRRPLAQLREVHLRRFNLRRSALELFFIDQSNYFLNFPHKVAASSASSPCQAPRPQLYPIPSHTQLRNQVYSLLLRLRPPTQGYLSSRSPLEMLRASGLTQKWVQREISNFEYLMQLNTIAGRTYNDLSQYPVFPWVLQDYVSPVLDLSNPAVFRDLSKPIGVVNPKHAQLVREKYESFEDPAGTIDKFHYGTHYSNAAGVMHYLIRVEPFTSLHVQLQSGRFDCSDRQFHSVAAAWQARLESPADVKELIPEFFYFPDFLENQNGFDLGCLQLTNEKVGDVVLPPWAGSPEDFIQKHRQALESEYVSTHLHEWIDLIFGYKQRGPAAEEALNVFYYCTYEGAVDLDHVADERERKALEGIISNFGQTPCQLLKEPHPPRLSAEEAANRLARLDTNSPSIFQNLNQLKAFFAEVVSEAVPLVLALVPHRQSHSFITQSSSDMLVTVSASGLLGTHTWLPYDRNINNYFTFSKDPTMGSPKVQKLLSGPWVSDSGVSAQALAVAPDGKLLFSGGHWDGSLRVTSLPRGRLLNQLSRHLDIVTCLALDTCGIYLISGSRDTTCMVWRLLQQSGLSAGLAPKPVQVLYGHVAAVSCVAISTELDMAVSGSEDGTVIIHTVRRGQFVAALRPPGATLPGPISHLALGAEGQIVVQSSACERPGAQVTYSLHLYSVNGRLRASVTLTEQPTALTVAEDFVLLGTAQCSLHILHLNKLRPAVPPLPMKVPVHSVSVTKERSHVLVGLEDGKLIVVGAGQPSEVRSSQFARRLWRSSRRISQVSSGETEYNPGEAR.

Disordered regions lie at residues 1312–1333 (ALSP…PSES) and 1356–1434 (LERA…QQTP). The span at 1384 to 1394 (TPSPLDGPRPF) shows a compositional bias: pro residues. Positions 1421–1433 (GDDTSNTSNPQQT) are enriched in polar residues. Residue T1855 is modified to Phosphothreonine. The region spanning 1903-2028 (EKREKLVLSA…LRNQVYSLLL (126 aa)) is the BEACH-type PH domain. A BEACH domain is found at 2041–2333 (RSPLEMLRAS…QLLKEPHPPR (293 aa)). WD repeat units follow at residues 2374–2412 (LVLA…TWLP), 2436–2479 (KLLS…SLPR), 2482–2519 (LLNQ…VWRL), 2532–2570 (KPVQ…IHTV), 2577–2619 (AALR…TYSL), 2627–2662 (RLRA…ILHL), and 2670–2705 (PPLP…VGAG). Phosphoserine is present on residues S2727 and S2730.

The protein belongs to the WD repeat neurobeachin family.

The protein localises to the endoplasmic reticulum. In terms of biological role, probably involved in thrombopoiesis. Plays a role in the development or secretion of alpha-granules, that contain several growth factors important for platelet biogenesis. This Mus musculus (Mouse) protein is Neurobeachin-like protein 2 (Nbeal2).